Here is a 364-residue protein sequence, read N- to C-terminus: MLPPVPSRLGLLLLLLCPAHVDGLWWAVGSPLVMDPTSICRKARRLAGRQAELCQAEPEVVAELARGARLGVRECQFQFRFRRWNCSSHSKAFGRVLQQDIRETAFVFAITAAGASHAVTQACSMGELLQCGCQAPRGRAPPRPSGLLGTPGPPGPTGSPDASAAWEWGGCGDDVDFGDEKSRLFMDAQHKRGRGDIRALVQLHNNEAGRLAVRSHTRTECKCHGLSGSCALRTCWQKLPPFREVGARLLERFHGASRVMGTNDGKALLPAVRTLKPPGRADLLYAADSPDFCAPNRRTGSPGTRGRACNSSAPDLSGCDLLCCGRGHRQESVQLEENCLCRFHWCCVVQCHRCRVRKELSLCL.

The N-terminal stretch at 1 to 23 is a signal peptide; it reads MLPPVPSRLGLLLLLLCPAHVDG. Disulfide bonds link Cys-75-Cys-86, Cys-123-Cys-131, Cys-133-Cys-171, Cys-221-Cys-235, Cys-223-Cys-230, Cys-293-Cys-324, Cys-309-Cys-319, Cys-323-Cys-363, Cys-339-Cys-354, Cys-341-Cys-351, and Cys-346-Cys-347. N-linked (GlcNAc...) asparagine glycosylation is present at Asn-85. A disordered region spans residues 140-162; the sequence is APPRPSGLLGTPGPPGPTGSPDA. Residue Ser-227 is the site of O-palmitoleoyl serine; by PORCN attachment. Residue Asn-310 is glycosylated (N-linked (GlcNAc...) asparagine).

This sequence belongs to the Wnt family. Interacts with PORCN. Post-translationally, palmitoleoylation is required for efficient binding to frizzled receptors. Depalmitoleoylation leads to Wnt signaling pathway inhibition. As to expression, detected in ileum, colon and stomach (at protein level).

The protein resides in the secreted. The protein localises to the extracellular space. It is found in the extracellular matrix. In terms of biological role, ligand for members of the frizzled family of seven transmembrane receptors. Probable developmental protein. May be a signaling molecule which affects the development of discrete regions of tissues. Is likely to signal over only few cell diameters. The chain is Protein Wnt-6 (Wnt6) from Mus musculus (Mouse).